Consider the following 500-residue polypeptide: Probable serine carboxypeptidase CPVL (500 aa).

An N-terminal signal peptide occupies residues 1–23 (MKVSLSFLLTILIVIITIKVNLS). Asn110 and Asn161 each carry an N-linked (GlcNAc...) asparagine glycan. The active site involves Ser233. N-linked (GlcNAc...) asparagine glycosylation is found at Asn333 and Asn360. Residues Asp414 and His474 contribute to the active site.

Belongs to the peptidase S10 family.

The protein resides in the secreted. Functionally, may be involved in the digestion of phagocytosed particles in the lysosome, participation in an inflammatory protease cascade, and trimming of peptides for antigen presentation. The protein is Probable serine carboxypeptidase CPVL (cpvl) of Dictyostelium discoideum (Social amoeba).